We begin with the raw amino-acid sequence, 563 residues long: CDKN2A-interacting protein (563 aa).

Alanine 2 carries the post-translational modification N-acetylalanine. Positions 19–126 (VETLRCEGET…KVKKRGISSS (108 aa)) constitute an XRN2-binding (XTBD) domain. Disordered stretches follow at residues 122–289 (GISS…LLGS) and 304–351 (SSSE…PSLL). Phosphoserine is present on serine 124. Residues 147–160 (VERDHGKKSAKTDR) are compositionally biased toward basic and acidic residues. Low complexity-rich tracts occupy residues 168–216 (SSPS…SSQV) and 234–248 (SASF…SMNS). Residue lysine 177 forms a Glycyl lysine isopeptide (Lys-Gly) (interchain with G-Cter in SUMO1) linkage. Serine 234 bears the Phosphoserine mark. Polar residues predominate over residues 249 to 262 (HMTQSTDNRQQSGS). Over residues 270–280 (GSSGSASQSSS) the composition is skewed to low complexity. The residue at position 340 (threonine 340) is a Phosphothreonine. Serine 371 is subject to Phosphoserine. One can recognise a DRBM domain in the interval 445 to 520 (NHGELLNAAI…SREALKLFLK (76 aa)).

Belongs to the CARF family. In terms of assembly, interacts with CDKN2A/p14ARF, p53/TP53 and MDM2. Interacts with CHEK2 and MAPK3. Interacts with XRN2. May be ubiquitinated.

The protein resides in the nucleus. The protein localises to the nucleoplasm. Its function is as follows. Regulates DNA damage response and cell proliferation in a dose-dependent manner through a number of signaling pathways involved in cell proliferation, apoptosis and senescence. This chain is CDKN2A-interacting protein (Cdkn2aip), found in Mus musculus (Mouse).